Reading from the N-terminus, the 502-residue chain is Glutamate--tRNA ligase (502 aa).

The 'HIGH' region motif lies at 12 to 22 (PSPTGYLHVGG). Positions 259–263 (KLSKR) match the 'KMSKS' region motif. K262 contacts ATP.

This sequence belongs to the class-I aminoacyl-tRNA synthetase family. Glutamate--tRNA ligase type 1 subfamily. Monomer.

It is found in the cytoplasm. The catalysed reaction is tRNA(Glu) + L-glutamate + ATP = L-glutamyl-tRNA(Glu) + AMP + diphosphate. Its function is as follows. Catalyzes the attachment of glutamate to tRNA(Glu) in a two-step reaction: glutamate is first activated by ATP to form Glu-AMP and then transferred to the acceptor end of tRNA(Glu). This is Glutamate--tRNA ligase from Chlorobium phaeobacteroides (strain DSM 266 / SMG 266 / 2430).